A 105-amino-acid chain; its full sequence is Large ribosomal subunit protein eL42 (105 aa).

The segment at 23–52 (KVTQYKKGKESRLAQGRRRYDSKQKGFGGQ) is disordered. Residues 29–46 (KGKESRLAQGRRRYDSKQ) show a composition bias toward basic and acidic residues.

Belongs to the eukaryotic ribosomal protein eL42 family.

The chain is Large ribosomal subunit protein eL42 (rpl-44) from Brugia malayi (Filarial nematode worm).